Reading from the N-terminus, the 397-residue chain is 3-ketoacyl-CoA thiolase, mitochondrial (397 aa).

The transit peptide at 1-16 (MALLRGVFVVAAKRTP) directs the protein to the mitochondrion; not cleaved. At lysine 25 the chain carries N6-acetyllysine; alternate. Lysine 25 is modified (N6-succinyllysine; alternate). Lysine 45 carries the post-translational modification N6-succinyllysine. Cysteine 92 functions as the Acyl-thioester intermediate in the catalytic mechanism. Residue threonine 119 is modified to Phosphothreonine. Serine 121 carries the post-translational modification Phosphoserine. Tyrosine 127 carries the phosphotyrosine modification. Residue threonine 136 is modified to Phosphothreonine. At lysine 137 the chain carries N6-acetyllysine; alternate. Lysine 137 is subject to N6-succinyllysine; alternate. Residue serine 140 is modified to Phosphoserine. 4 positions are modified to N6-acetyllysine; alternate: lysine 143, lysine 171, lysine 191, and lysine 209. Lysine 143, lysine 171, lysine 191, and lysine 209 each carry N6-succinyllysine; alternate. N6-succinyllysine is present on residues lysine 211, lysine 212, and lysine 214. 2 residues coordinate CoA: arginine 224 and threonine 227. Lysine 234 is modified (N6-acetyllysine; alternate). Lysine 234 is subject to N6-succinyllysine; alternate. Lysine 240 carries the N6-succinyllysine modification. Lysine 241 is subject to N6-acetyllysine. Serine 251 lines the CoA pocket. N6-acetyllysine occurs at positions 269 and 270. Lysine 305 is modified (N6-acetyllysine; alternate). Lysine 305 carries the post-translational modification N6-succinyllysine; alternate. Serine 310 is modified (phosphoserine). An N6-acetyllysine; alternate modification is found at lysine 312. The residue at position 312 (lysine 312) is an N6-succinyllysine; alternate. Serine 333 carries the post-translational modification Phosphoserine. 2 positions are modified to N6-acetyllysine: lysine 340 and lysine 375. Cysteine 382 serves as the catalytic Proton donor/acceptor.

The protein belongs to the thiolase-like superfamily. Thiolase family. In terms of assembly, homotetramer. Interacts with BNIP3.

It is found in the mitochondrion. The catalysed reaction is an acyl-CoA + acetyl-CoA = a 3-oxoacyl-CoA + CoA. The enzyme catalyses 2 acetyl-CoA = acetoacetyl-CoA + CoA. It catalyses the reaction acetyl-CoA + H2O = acetate + CoA + H(+). It carries out the reaction propanoyl-CoA + H2O = propanoate + CoA + H(+). The catalysed reaction is butanoyl-CoA + H2O = butanoate + CoA + H(+). The enzyme catalyses hexanoyl-CoA + H2O = hexanoate + CoA + H(+). It catalyses the reaction octanoyl-CoA + H2O = octanoate + CoA + H(+). It carries out the reaction decanoyl-CoA + H2O = decanoate + CoA + H(+). The catalysed reaction is dodecanoyl-CoA + H2O = dodecanoate + CoA + H(+). The enzyme catalyses tetradecanoyl-CoA + H2O = tetradecanoate + CoA + H(+). It catalyses the reaction hexadecanoyl-CoA + H2O = hexadecanoate + CoA + H(+). It participates in lipid metabolism; fatty acid beta-oxidation. In the production of energy from fats, this is one of the enzymes that catalyzes the last step of the mitochondrial beta-oxidation pathway, an aerobic process breaking down fatty acids into acetyl-CoA. Using free coenzyme A/CoA, catalyzes the thiolytic cleavage of medium- to long-chain unbranched 3-oxoacyl-CoAs into acetyl-CoA and a fatty acyl-CoA shortened by two carbon atoms. Also catalyzes the condensation of two acetyl-CoA molecules into acetoacetyl-CoA and could be involved in the production of ketone bodies. Also displays hydrolase activity on various fatty acyl-CoAs. Thereby, could be responsible for the production of acetate in a side reaction to beta-oxidation. Abolishes BNIP3-mediated apoptosis and mitochondrial damage. In Homo sapiens (Human), this protein is 3-ketoacyl-CoA thiolase, mitochondrial (ACAA2).